The following is a 712-amino-acid chain: Testis-specific gene 10 protein (712 aa).

S161 bears the Phosphoserine mark. The interaction with HIF1A stretch occupies residues 571-703; it reads QMTNERISMQ…SPDRDLDRSL (133 aa). The tract at residues 673–699 is disordered; the sequence is YHLGSMKPNTKCHSPERAHHRSPDRDL. Residues 685–699 show a composition bias toward basic and acidic residues; sequence HSPERAHHRSPDRDL. The residue at position 702 (S702) is a Phosphoserine.

The protein belongs to the CEP135/TSGA10 family. As to quaternary structure, interacts with HIF1A. Post-translationally, processed into N-terminal 27-kDa and C-terminal 55-kDa fragments. As to expression, expressed in testis, predominantly in elongated spermatids (at protein level). Detected in spermatocytes only at the mRNA, but not at the protein level.

The protein localises to the cytoplasm. It is found in the cytoskeleton. Its subcellular location is the microtubule organizing center. The protein resides in the centrosome. It localises to the centriole. Functionally, plays a role in spermatogenesis. When overexpressed, prevents nuclear localization of HIF1A. This chain is Testis-specific gene 10 protein (Tsga10), found in Rattus norvegicus (Rat).